We begin with the raw amino-acid sequence, 312 residues long: Malate dehydrogenase (312 aa).

Residues 7-13 (GAAGGIG) and Asp-34 each bind NAD(+). Substrate contacts are provided by Arg-81 and Arg-87. NAD(+) is bound by residues Asn-94 and 117-119 (ITN). The substrate site is built by Asn-119 and Arg-153. His-177 serves as the catalytic Proton acceptor. NAD(+) is bound at residue Met-227.

This sequence belongs to the LDH/MDH superfamily. MDH type 1 family. As to quaternary structure, homodimer.

The enzyme catalyses (S)-malate + NAD(+) = oxaloacetate + NADH + H(+). In terms of biological role, catalyzes the reversible oxidation of malate to oxaloacetate. The sequence is that of Malate dehydrogenase from Salmonella agona (strain SL483).